A 280-amino-acid polypeptide reads, in one-letter code: Putative high affinity immunoglobulin gamma Fc receptor IB (280 aa).

Positions 1–15 are cleaved as a signal peptide; that stretch reads MWFLTTLLLWVPVDG. Residues 16-198 lie on the Extracellular side of the membrane; that stretch reads QVDTTKAVIT…LQLPTPVWFH (183 aa). Ig-like C2-type domains are found at residues 22–101 and 95–184; these read AVIT…LEIH and PIQL…ISQY. Cystine bridges form between cysteine 43/cysteine 85 and cysteine 124/cysteine 168. N-linked (GlcNAc...) asparagine glycosylation is found at asparagine 59, asparagine 152, and asparagine 163. A helical membrane pass occupies residues 199–219; it reads VLFYLAVGIMFLVNTVLWVTI. Topologically, residues 220–280 are cytoplasmic; sequence RKELKRKKKW…VHRKEPQGAT (61 aa). Residues 258-280 form a disordered region; that stretch reads KCQEQKEEQLQEGVHRKEPQGAT.

The protein belongs to the immunoglobulin superfamily. FCGR1 family.

Its subcellular location is the cell membrane. May bind to the Fc region of immunoglobulins gamma with a low affinity compared to FCGR1A. May function in the humoral immune response. The chain is Putative high affinity immunoglobulin gamma Fc receptor IB from Homo sapiens (Human).